The chain runs to 514 residues: Probable lipid II flippase MurJ (514 aa).

A run of 14 helical transmembrane segments spans residues 3 to 23 (ILKS…FGFF), 25 to 45 (DVLI…FIAF), 92 to 112 (ILVL…IIFI), 130 to 150 (LLKI…CSSI), 157 to 177 (FFIP…FSFF), 186 to 206 (IISL…YQFP), 245 to 265 (ISLI…ISWI), 271 to 291 (LIEF…FTSF), 315 to 335 (LILS…LVII), 354 to 374 (LELY…VSAF), 386 to 406 (ISIL…FYFQ), 409 to 429 (GLAL…YWKL), 448 to 468 (LLIA…FIPS), and 481 to 501 (LFTI…FLGI).

This sequence belongs to the MurJ/MviN family.

The protein localises to the cell inner membrane. The protein operates within cell wall biogenesis; peptidoglycan biosynthesis. Its function is as follows. Involved in peptidoglycan biosynthesis. Transports lipid-linked peptidoglycan precursors from the inner to the outer leaflet of the cytoplasmic membrane. This chain is Probable lipid II flippase MurJ, found in Buchnera aphidicola subsp. Schizaphis graminum (strain Sg).